The following is a 126-amino-acid chain: Phosphoribosyl-AMP cyclohydrolase (126 aa).

Asp-77 serves as a coordination point for Mg(2+). Cys-78 is a binding site for Zn(2+). Mg(2+) contacts are provided by Asp-79 and Asp-81. Residues Cys-95 and Cys-102 each coordinate Zn(2+).

Belongs to the PRA-CH family. As to quaternary structure, homodimer. It depends on Mg(2+) as a cofactor. Zn(2+) serves as cofactor.

Its subcellular location is the cytoplasm. It carries out the reaction 1-(5-phospho-beta-D-ribosyl)-5'-AMP + H2O = 1-(5-phospho-beta-D-ribosyl)-5-[(5-phospho-beta-D-ribosylamino)methylideneamino]imidazole-4-carboxamide. It participates in amino-acid biosynthesis; L-histidine biosynthesis; L-histidine from 5-phospho-alpha-D-ribose 1-diphosphate: step 3/9. Its function is as follows. Catalyzes the hydrolysis of the adenine ring of phosphoribosyl-AMP. The chain is Phosphoribosyl-AMP cyclohydrolase from Cellvibrio japonicus (strain Ueda107) (Pseudomonas fluorescens subsp. cellulosa).